A 345-amino-acid chain; its full sequence is MENILDYNEAELKQWMDKNGEKTFRAKQFFDWIYNGTFDFKDMKNLPQSTRERLEKNFYIGMPSVVKRLNSKKGDTVKFLFRYNDGNIIECVVMKYDYGNSICISTQVGCRMGCSFCASTIGGRVRDLTSGEILAQILKAQKEIGERISNIVLMGSGEPLDNYDNVIKFIRIVNSEKGLNIGQRHITLSTCGIVPRIYDLMKENLQITLAISLHASDDETRKKIMPIANRYSISEIIDCCKKYSDFTGRRITFEYSLVKDVNDDKESAKKLGELLSGMLCHVNLIPVNTVNETSYEKPESSKIKKFCDTLLKYKIESTIRKEMGADINAACGQLRRNYIEESEGK.

Glu90 functions as the Proton acceptor in the catalytic mechanism. Positions 96 to 326 constitute a Radical SAM core domain; that stretch reads YDYGNSICIS…STIRKEMGAD (231 aa). Cysteines 103 and 331 form a disulfide. [4Fe-4S] cluster is bound by residues Cys110, Cys114, and Cys117. Residues 157–158, Ser189, 212–214, and Asn288 contribute to the S-adenosyl-L-methionine site; these read GE and SLH. The active-site S-methylcysteine intermediate is the Cys331.

Belongs to the radical SAM superfamily. RlmN family. [4Fe-4S] cluster is required as a cofactor.

The protein resides in the cytoplasm. It catalyses the reaction adenosine(2503) in 23S rRNA + 2 reduced [2Fe-2S]-[ferredoxin] + 2 S-adenosyl-L-methionine = 2-methyladenosine(2503) in 23S rRNA + 5'-deoxyadenosine + L-methionine + 2 oxidized [2Fe-2S]-[ferredoxin] + S-adenosyl-L-homocysteine. The enzyme catalyses adenosine(37) in tRNA + 2 reduced [2Fe-2S]-[ferredoxin] + 2 S-adenosyl-L-methionine = 2-methyladenosine(37) in tRNA + 5'-deoxyadenosine + L-methionine + 2 oxidized [2Fe-2S]-[ferredoxin] + S-adenosyl-L-homocysteine. Functionally, specifically methylates position 2 of adenine 2503 in 23S rRNA and position 2 of adenine 37 in tRNAs. The chain is Probable dual-specificity RNA methyltransferase RlmN from Clostridium acetobutylicum (strain ATCC 824 / DSM 792 / JCM 1419 / IAM 19013 / LMG 5710 / NBRC 13948 / NRRL B-527 / VKM B-1787 / 2291 / W).